Reading from the N-terminus, the 127-residue chain is Turripeptide OL172 (127 aa).

The N-terminal stretch at 1–20 (MFSTLIFLTAVTLLMMPSQT) is a signal peptide. Positions 42–43 (QR) are excised as a propeptide. Residue Gln44 is modified to Pyrrolidone carboxylic acid. Positions 73–75 (QRK) are excised as a propeptide. Gln76 carries the post-translational modification Pyrrolidone carboxylic acid. Positions 104–106 (QRK) are excised as a propeptide. Gln107 is subject to Pyrrolidone carboxylic acid.

In terms of processing, the turripeptide OL172 conotoxin-like contains 2 disulfide bonds. As to expression, expressed by the venom duct.

It is found in the secreted. Functionally, acts as a neurotoxin by inhibiting an ion channel. The chain is Turripeptide OL172 from Iotyrris olangoensis (Sea snail).